The sequence spans 93 residues: Defensin 5 (93 aa).

The signal sequence occupies residues 1-19 (MKKLVLLSALVLLALQVEA). Positions 20-58 (EPTPKTDEGTKTDEQPGKEDQVVSVSIEGQGDPAFQDAV) are excised as a propeptide. 3 disulfides stabilise this stretch: Cys64–Cys92, Cys66–Cys81, and Cys71–Cys91.

It belongs to the alpha-defensin family. In terms of tissue distribution, small intestine. Not present in heart, liver, spleen, kidney, large intestine and colon.

It is found in the secreted. Probably contributes to the antimicrobial barrier function of the small intestine. The sequence is that of Defensin 5 from Rattus norvegicus (Rat).